The following is a 180-amino-acid chain: Probable Brix domain-containing ribosomal biogenesis protein (180 aa).

The 178-residue stretch at 1-178 (MTTSRRPSPR…KPAEMVKRGR (178 aa)) folds into the Brix domain.

In terms of biological role, probably involved in the biogenesis of the ribosome. The chain is Probable Brix domain-containing ribosomal biogenesis protein from Aeropyrum pernix (strain ATCC 700893 / DSM 11879 / JCM 9820 / NBRC 100138 / K1).